A 913-amino-acid polypeptide reads, in one-letter code: Rab GTPase-activating protein tbc-8 (913 aa).

The interval methionine 1–threonine 24 is disordered. One can recognise an RUN domain in the interval asparagine 106–glutamate 240. Positions isoleucine 597–glutamine 844 constitute a Rab-GAP TBC domain.

Belongs to the RUTBC family. Interacts with rab-19. Interacts with ric-19; the interaction is direct and may be required for the activation of rab-2 and dense vesicle maturation in cholinergic motoneurons. Interacts (via RUN domain) with rund-1. Does not interact with unc-108 (GTP-bound form). Expressed in neurons in the head, tail and ventral nerve cord (at protein level).

It localises to the golgi apparatus. The protein resides in the trans-Golgi network. The protein localises to the early endosome. Its subcellular location is the cytoplasmic vesicle membrane. Functionally, interacts with numerous Rab family members, functioning as Rab effector for some, and as GTPase activator for others. GTPase activator for rab-2. In association with ric-19 activates rab-2 during dense core vesicle maturation in cholinergic motoneurons. This chain is Rab GTPase-activating protein tbc-8, found in Caenorhabditis elegans.